The primary structure comprises 147 residues: Protein phosphatase 1 regulatory subunit 14A (147 aa).

The segment covering 1–11 has biased composition (basic residues); that stretch reads MAAQRLGKRVL. The interval 1–37 is disordered; it reads MAAQRLGKRVLSKLQSPSRARGPGGSPGGLQKRHARV. S26 bears the Phosphoserine mark. The tract at residues 35-120 is inhibitory; sequence ARVTVKYDRR…LLVKLRGLHK (86 aa). T38 is subject to Phosphothreonine. The tract at residues 118–147 is disordered; it reads LHKQPGLRQPSPSGDGSLSPRQDRARTAPP. The span at 127-137 shows a compositional bias: polar residues; it reads PSPSGDGSLSP. Phosphoserine is present on residues S128, S134, and S136. A compositionally biased stretch (basic and acidic residues) spans 138-147; it reads RQDRARTAPP.

This sequence belongs to the PP1 inhibitor family. Phosphorylation of Thr-38 induces a conformation change. In terms of tissue distribution, detected in aorta smooth muscle and bladder.

The protein resides in the cytoplasm. Its function is as follows. Inhibitor of PPP1CA. Has over 1000-fold higher inhibitory activity when phosphorylated, creating a molecular switch for regulating the phosphorylation status of PPP1CA substrates and smooth muscle contraction. The polypeptide is Protein phosphatase 1 regulatory subunit 14A (CPI17) (Sus scrofa (Pig)).